Consider the following 395-residue polypeptide: Protochlorophyllide reductase B, chloroplastic (395 aa).

The N-terminal 59 residues, 1 to 59, are a transit peptide targeting the chloroplast; that stretch reads MALQAATSFLPSALSARKEGAAKDSAFFGVRLADGLKLDATSLGLRTKRVNTSSVAIRA.

The protein belongs to the short-chain dehydrogenases/reductases (SDR) family. POR subfamily.

The protein resides in the plastid. It localises to the chloroplast. It carries out the reaction chlorophyllide a + NADP(+) = protochlorophyllide a + NADPH + H(+). It functions in the pathway porphyrin-containing compound metabolism; chlorophyll biosynthesis. Functionally, phototransformation of protochlorophyllide (Pchlide) to chlorophyllide (Chlide). The polypeptide is Protochlorophyllide reductase B, chloroplastic (PORB) (Hordeum vulgare (Barley)).